We begin with the raw amino-acid sequence, 438 residues long: Putative permease HI_0125 (438 aa).

The next 13 helical transmembrane spans lie at 21–41, 51–71, 73–93, 97–117, 137–157, 167–187, 195–215, 238–258, 296–316, 326–346, 347–367, 386–406, and 418–438; these read IIAG…VPNM, SVFI…GLWA, APMA…SLVI, VAIP…TLIS, AGIG…GLVV, LGDF…LIIG, GGIL…DPNV, FMGA…MTAV, LFSG…AAGT, AIVV…AFLV, PGYA…SNVS, FIVL…ALVI, and NVGT…GWAI. 315 to 322 is a binding site for ATP; sequence GTAAGGKT.

The protein belongs to the nucleobase:cation symporter-2 (NCS2) (TC 2.A.40) family. Azg-like subfamily.

It localises to the cell membrane. This is Putative permease HI_0125 from Haemophilus influenzae (strain ATCC 51907 / DSM 11121 / KW20 / Rd).